The sequence spans 376 residues: Phytanoyl-CoA hydroxylase interacting protein-like (376 aa).

A phosphoserine mark is found at Ser-12 and Ser-15. The N-linked (GlcNAc...) asparagine glycan is linked to Asn-23. Ser-25 is modified (phosphoserine). Asn-37 carries an N-linked (GlcNAc...) asparagine glycan. The Fibronectin type-III domain maps to 52 to 161; the sequence is VPRNIKISNI…EIIEFCTADY (110 aa).

Belongs to the PHYHIP family.

In terms of biological role, may play a role in the development of the central system. The sequence is that of Phytanoyl-CoA hydroxylase interacting protein-like (PHYHIPL) from Bos taurus (Bovine).